The chain runs to 252 residues: 3-dehydroquinate dehydratase (252 aa).

3-dehydroquinate contacts are provided by residues 46 to 48 (EWR) and Arg-82. Catalysis depends on His-143, which acts as the Proton donor/acceptor. The active-site Schiff-base intermediate with substrate is Lys-170. 3 residues coordinate 3-dehydroquinate: Arg-212, Ser-231, and Gln-235.

It belongs to the type-I 3-dehydroquinase family. As to quaternary structure, homodimer.

The catalysed reaction is 3-dehydroquinate = 3-dehydroshikimate + H2O. The protein operates within metabolic intermediate biosynthesis; chorismate biosynthesis; chorismate from D-erythrose 4-phosphate and phosphoenolpyruvate: step 3/7. Functionally, involved in the third step of the chorismate pathway, which leads to the biosynthesis of aromatic amino acids. Catalyzes the cis-dehydration of 3-dehydroquinate (DHQ) and introduces the first double bond of the aromatic ring to yield 3-dehydroshikimate. This chain is 3-dehydroquinate dehydratase, found in Listeria innocua serovar 6a (strain ATCC BAA-680 / CLIP 11262).